The chain runs to 156 residues: Small ribosomal subunit protein uS7 (156 aa).

The protein belongs to the universal ribosomal protein uS7 family. In terms of assembly, part of the 30S ribosomal subunit. Contacts proteins S9 and S11.

One of the primary rRNA binding proteins, it binds directly to 16S rRNA where it nucleates assembly of the head domain of the 30S subunit. Is located at the subunit interface close to the decoding center, probably blocks exit of the E-site tRNA. The protein is Small ribosomal subunit protein uS7 of Burkholderia multivorans (strain ATCC 17616 / 249).